A 717-amino-acid chain; its full sequence is Polyribonucleotide nucleotidyltransferase (717 aa).

Residues D486 and D492 each coordinate Mg(2+). In terms of domain architecture, KH spans 553–612 (PKIVQLQIDIDKISLVIGSTGKTVKAITDEFEVRVQIEQDGRITLFGTDNLKMQKAKAKI). The 94-residue stretch at 622 to 715 (GEIYDGIVKK…KFGKIELELA (94 aa)) folds into the S1 motif domain. Positions 650–681 (SNRSRSRDDRYGSDIRHSRYSNRNSRYGRDNR) are disordered. Residues 654 to 666 (RSRDDRYGSDIRH) are compositionally biased toward basic and acidic residues.

The protein belongs to the polyribonucleotide nucleotidyltransferase family. Mg(2+) is required as a cofactor.

The protein localises to the cytoplasm. It carries out the reaction RNA(n+1) + phosphate = RNA(n) + a ribonucleoside 5'-diphosphate. Functionally, involved in mRNA degradation. Catalyzes the phosphorolysis of single-stranded polyribonucleotides processively in the 3'- to 5'-direction. The chain is Polyribonucleotide nucleotidyltransferase from Borrelia duttonii (strain Ly).